The chain runs to 100 residues: Putative septation protein SpoVG (100 aa).

This sequence belongs to the SpoVG family.

In terms of biological role, could be involved in septation. This chain is Putative septation protein SpoVG, found in Staphylococcus aureus (strain JH1).